Consider the following 261-residue polypeptide: Undecaprenyl-diphosphatase (261 aa).

The next 8 membrane-spanning stretches (helical) occupy residues 16–36 (TEFL…LFGF), 40–60 (GLVF…VYFW), 82–102 (FWFL…LEDI), 107–127 (LRAP…LYLA), 140–160 (IRFG…IPGV), 183–203 (FSFL…MLKM), 211–231 (SFVL…WFLI), and 239–259 (FNIF…IALL).

The protein belongs to the UppP family.

Its subcellular location is the cell membrane. The catalysed reaction is di-trans,octa-cis-undecaprenyl diphosphate + H2O = di-trans,octa-cis-undecaprenyl phosphate + phosphate + H(+). Its function is as follows. Catalyzes the dephosphorylation of undecaprenyl diphosphate (UPP). Confers resistance to bacitracin. The polypeptide is Undecaprenyl-diphosphatase (Desulforudis audaxviator (strain MP104C)).